The sequence spans 285 residues: Heterogeneous nuclear ribonucleoprotein A/B (285 aa).

Residues 1 to 65 form a disordered region; sequence MSDAAEEQPM…NQNGAEGDQI (65 aa). Residues 25–43 are compositionally biased toward low complexity; that stretch reads EGEAPVEPSAAAAAPAASA. RRM domains follow at residues 75 to 158 and 159 to 238; these read GKMF…KDPV and KKIF…QPKE. Ser-87 carries the post-translational modification Phosphoserine. Glycyl lysine isopeptide (Lys-Gly) (interchain with G-Cter in SUMO2) cross-links involve residues Lys-136 and Lys-208. Lys-220 bears the N6-acetyllysine mark. The tract at residues 239–285 is disordered; sequence VYQQQQYGSGGRGNRNRGNRGSGGGQGSTNYGKSQRRGGHQNNYKPY. Ser-247 is subject to Phosphoserine. Arg-250 bears the Dimethylated arginine; alternate mark. Arg-250 bears the Omega-N-methylarginine; alternate mark. Residues Arg-255 and Arg-258 each carry the omega-N-methylarginine modification. Lys-271 carries the N6-acetyllysine modification. The residue at position 275 (Arg-275) is a Dimethylated arginine; alternate. An Omega-N-methylarginine; alternate modification is found at Arg-275. An Asymmetric dimethylarginine; alternate modification is found at Arg-275.

As to quaternary structure, identified in a IGF2BP1-dependent mRNP granule complex containing untranslated mRNAs. Interacts with APOBEC1. As to expression, ubiquitous.

The protein localises to the nucleus. Its subcellular location is the cytoplasm. Transcriptional repressor. Binds to CArG box motifs, single-stranded and double-stranded DNA, and RNA. It may be that repression by CBF-A is a result of competitive binding of CBF, a putative positive factor, and CBF-A to the same or overlapping motifs around the CArG boxes. This is Heterogeneous nuclear ribonucleoprotein A/B (Hnrnpab) from Mus musculus (Mouse).